Here is a 429-residue protein sequence, read N- to C-terminus: Glutamate-1-semialdehyde 2,1-aminomutase (429 aa).

Residue lysine 265 is modified to N6-(pyridoxal phosphate)lysine.

This sequence belongs to the class-III pyridoxal-phosphate-dependent aminotransferase family. HemL subfamily. Homodimer. The cofactor is pyridoxal 5'-phosphate.

It localises to the cytoplasm. It carries out the reaction (S)-4-amino-5-oxopentanoate = 5-aminolevulinate. The protein operates within porphyrin-containing compound metabolism; protoporphyrin-IX biosynthesis; 5-aminolevulinate from L-glutamyl-tRNA(Glu): step 2/2. In Azotobacter vinelandii (strain DJ / ATCC BAA-1303), this protein is Glutamate-1-semialdehyde 2,1-aminomutase.